We begin with the raw amino-acid sequence, 226 residues long: ATP synthase subunit a 1 (226 aa).

The next 5 membrane-spanning stretches (helical) occupy residues 20–40 (LTIVTTWAVMLLLAGGSWLIT), 78–98 (YLPFIATLFLFIATANLCTVI), 113–133 (ALALSVFIAVPLFGIAESGLV), 174–194 (MILVILLTISPLVFPVLMNIL), and 196–216 (LLTGMVQAYIFSILATVYIAA).

It belongs to the ATPase A chain family. In terms of assembly, F-type ATPases have 2 components, CF(1) - the catalytic core - and CF(0) - the membrane proton channel. CF(1) has five subunits: alpha(3), beta(3), gamma(1), delta(1), epsilon(1). CF(0) has four main subunits: a, b, b' and c.

The protein localises to the cell inner membrane. Its function is as follows. Key component of the proton channel; it plays a direct role in the translocation of protons across the membrane. The polypeptide is ATP synthase subunit a 1 (Chlorobaculum parvum (strain DSM 263 / NCIMB 8327) (Chlorobium vibrioforme subsp. thiosulfatophilum)).